Consider the following 343-residue polypeptide: UBP1-associated proteins 1A (343 aa).

Residues 1-61 are disordered; it reads MAKTLDKSKK…SESDNEFDPE (61 aa). The span at 28–49 shows a compositional bias: low complexity; that stretch reads NKQQQQPESSTPYSSSSSSSDS. Positions 50 to 61 are enriched in acidic residues; it reads SDSESDNEFDPE. Positions 104 to 181 constitute an RRM domain; it reads RKIFVYGLPW…RTATCQLASM (78 aa). The tract at residues 312-343 is disordered; sequence STYPDSDAGGKRGTGKDSDAGGSSFHGYSNYS. Positions 319-330 are enriched in basic and acidic residues; that stretch reads AGGKRGTGKDSD.

As to quaternary structure, interacts with UBA1A, UBA2A, UBP1A, UBP1B and UBP1C.

It is found in the nucleus. Acts as a component of a complex regulating the turnover of mRNAs in the nucleus. Binds with high affinity to RNA molecules that contain U-rich sequences in 3'-UTRs. May function in complex with UBP1 and contribute to the stabilization of mRNAs in the nucleus. However, unlike UBP1, UBA1A does not stimulate pre-mRNA splicing. This Arabidopsis thaliana (Mouse-ear cress) protein is UBP1-associated proteins 1A (UBA1A).